The sequence spans 493 residues: Probable polyol transporter 6 (493 aa).

The next 12 membrane-spanning stretches (helical) occupy residues 25–45 (SIVSIIFGYDTGVMSGAMVFI), 54–74 (VQIEVLTGILNLCALVGSLLA), 85–105 (YTIVLASILFMLGSILMGWGP), 116–136 (TAGLGVGFALMVAPVYSAEIA), 142–162 (GLLASLPHLCISIGILLGYIV), 177–197 (LMLGIAAVPSLVLAFGILKMP), 275–295 (VLLTALGIHFFQHASGIEAVL), 313–333 (LFLVTIGVGIMKTTFIFTATL), 343–363 (LLLTSVGGMVIALTMLGFGLT), 372–392 (LAWALVLSIVAAYSFVAFFSI), 414–434 (GASLGVAVNRVMNATVSMSFL), and 444–464 (GAFFMFAGVAAVAWNFFFFLL).

Belongs to the major facilitator superfamily. Sugar transporter (TC 2.A.1.1) family.

The protein localises to the membrane. Its function is as follows. Plasma membrane sugar-proton symporter. This is Probable polyol transporter 6 (PLT6) from Arabidopsis thaliana (Mouse-ear cress).